We begin with the raw amino-acid sequence, 197 residues long: ATP-dependent Clp protease proteolytic subunit 1 (197 aa).

The active-site Nucleophile is serine 100. Histidine 125 is an active-site residue.

Belongs to the peptidase S14 family. In terms of assembly, fourteen ClpP subunits assemble into 2 heptameric rings which stack back to back to give a disk-like structure with a central cavity, resembling the structure of eukaryotic proteasomes.

The protein resides in the cytoplasm. It carries out the reaction Hydrolysis of proteins to small peptides in the presence of ATP and magnesium. alpha-casein is the usual test substrate. In the absence of ATP, only oligopeptides shorter than five residues are hydrolyzed (such as succinyl-Leu-Tyr-|-NHMec, and Leu-Tyr-Leu-|-Tyr-Trp, in which cleavage of the -Tyr-|-Leu- and -Tyr-|-Trp bonds also occurs).. Its function is as follows. Cleaves peptides in various proteins in a process that requires ATP hydrolysis. Has a chymotrypsin-like activity. Plays a major role in the degradation of misfolded proteins. In Gloeobacter violaceus (strain ATCC 29082 / PCC 7421), this protein is ATP-dependent Clp protease proteolytic subunit 1.